The following is an 83-amino-acid chain: MAFKREIQGVVVKIAGEKTASVLVERKVVHPRYRKIVKRFKKYLIHDERNEVKVGDTVVAVECRPLSKRKSFRLKSVLATGVE.

Belongs to the universal ribosomal protein uS17 family. Part of the 30S ribosomal subunit.

In terms of biological role, one of the primary rRNA binding proteins, it binds specifically to the 5'-end of 16S ribosomal RNA. The polypeptide is Small ribosomal subunit protein uS17 (Campylobacter jejuni subsp. jejuni serotype O:6 (strain 81116 / NCTC 11828)).